The chain runs to 590 residues: V-type ATP synthase alpha chain (590 aa).

232–239 (GPFGSGKT) contacts ATP.

The protein belongs to the ATPase alpha/beta chains family.

It carries out the reaction ATP + H2O + 4 H(+)(in) = ADP + phosphate + 5 H(+)(out). In terms of biological role, produces ATP from ADP in the presence of a proton gradient across the membrane. The V-type alpha chain is a catalytic subunit. This chain is V-type ATP synthase alpha chain, found in Thermoanaerobacter pseudethanolicus (strain ATCC 33223 / 39E) (Clostridium thermohydrosulfuricum).